The sequence spans 148 residues: Small ribosomal subunit protein uS13 (148 aa).

It belongs to the universal ribosomal protein uS13 family. As to quaternary structure, part of the 30S ribosomal subunit. Forms a loose heterodimer with protein S19. Forms two bridges to the 50S subunit in the 70S ribosome.

Its function is as follows. Located at the top of the head of the 30S subunit, it contacts several helices of the 16S rRNA. In the 70S ribosome it contacts the 23S rRNA (bridge B1a) and protein L5 of the 50S subunit (bridge B1b), connecting the 2 subunits; these bridges are implicated in subunit movement. The sequence is that of Small ribosomal subunit protein uS13 from Pyrococcus horikoshii (strain ATCC 700860 / DSM 12428 / JCM 9974 / NBRC 100139 / OT-3).